The following is a 313-amino-acid chain: Porphobilinogen deaminase (313 aa).

Residue C242 is modified to S-(dipyrrolylmethanemethyl)cysteine.

Belongs to the HMBS family. In terms of assembly, monomer. It depends on dipyrromethane as a cofactor.

It carries out the reaction 4 porphobilinogen + H2O = hydroxymethylbilane + 4 NH4(+). It participates in porphyrin-containing compound metabolism; protoporphyrin-IX biosynthesis; coproporphyrinogen-III from 5-aminolevulinate: step 2/4. Its function is as follows. Tetrapolymerization of the monopyrrole PBG into the hydroxymethylbilane pre-uroporphyrinogen in several discrete steps. This Pseudomonas fluorescens (strain ATCC BAA-477 / NRRL B-23932 / Pf-5) protein is Porphobilinogen deaminase.